The following is a 609-amino-acid chain: UvrABC system protein C (609 aa).

Residues Ser16–Val94 form the GIY-YIG domain. The UVR domain occupies Gln203 to Val238.

It belongs to the UvrC family. Interacts with UvrB in an incision complex.

The protein resides in the cytoplasm. Functionally, the UvrABC repair system catalyzes the recognition and processing of DNA lesions. UvrC both incises the 5' and 3' sides of the lesion. The N-terminal half is responsible for the 3' incision and the C-terminal half is responsible for the 5' incision. The protein is UvrABC system protein C of Shewanella baltica (strain OS155 / ATCC BAA-1091).